Reading from the N-terminus, the 293-residue chain is AKT-interacting protein (293 aa).

Positions 1–11 are enriched in polar residues; it reads MNPFWSMSTSS. The tract at residues 1-63 is disordered; sequence MNPFWSMSTS…TSPAPAAQST (63 aa). Positions 14 to 23 are enriched in basic and acidic residues; it reads KRSEGEEKTL. Ser30 is modified (phosphoserine). Positions 74 to 222 constitute a UBC core domain; the sequence is YLEYSLLAEF…VVDSVQVCTA (149 aa). Residues 253–265 are compositionally biased toward basic and acidic residues; sequence MLTQKKKPEEQHN. Residues 253–293 are disordered; sequence MLTQKKKPEEQHNKSVHVAGLSWVKPGSVQPFSKEEKTVAT.

It belongs to the ubiquitin-conjugating enzyme family. FTS subfamily. As to quaternary structure, component of the FTS/Hook/FHIP complex (FHF complex), composed of AKTIP/FTS, FHIP1B, and one or more members of the Hook family of proteins HOOK1, HOOK2, and HOOK3. Interacts directly with HOOK1, HOOK2 and HOOK3. The FHF complex associates with the homotypic vesicular sorting complex (the HOPS complex). Also interacts with AKT1. May interact with FHIP1A.

The protein resides in the cytoplasm. Its subcellular location is the cell membrane. Functionally, component of the FTS/Hook/FHIP complex (FHF complex). The FHF complex may function to promote vesicle trafficking and/or fusion via the homotypic vesicular protein sorting complex (the HOPS complex). Regulates apoptosis by enhancing phosphorylation and activation of AKT1. Increases release of TNFSF6 via the AKT1/GSK3B/NFATC1 signaling cascade. FHF complex promotes the distribution of AP-4 complex to the perinuclear area of the cell. The protein is AKT-interacting protein (AKTIP) of Pongo abelii (Sumatran orangutan).